A 954-amino-acid polypeptide reads, in one-letter code: Endogenous retrovirus group K member 25 Pol protein (954 aa).

The Reverse transcriptase domain occupies 57–245; the sequence is LEKGHIEPSF…TPFHYLGMQI (189 aa). The LPQG motif lies at 161–164; sequence LPQG. A YXDD motif is present at residues 195 to 198; that stretch reads YIDD. Positions 460–588 constitute an RNase H type-1 domain; it reads LENALTVFTD…ADLLVSSALI (129 aa). Residues D469, E497, D515, and D580 each coordinate Mg(2+). The Integrase-type zinc-finger motif lies at 585–626; it reads SALIKAQELHALTHVNAAGLKNKFDVTWKLAKDIVQHCTQCQ. Positions 594, 598, 622, and 625 each coordinate Zn(2+). Positions 640–801 constitute an Integrase catalytic domain; the sequence is RGLCPNALWQ…TSAEQHLTGK (162 aa). Positions 809-857 form a DNA-binding region, integrase-type; sequence KLIWWKDNKNKTWEIGKVITWGRGFACVSPGENQLPVWIPTRHLKFYNE. Residues 862–888 form a disordered region; it reads AKKSTSAETETPQSSTVDSQDEQNGDV. A compositionally biased stretch (polar residues) spans 867–879; it reads SAETETPQSSTVD.

It belongs to the beta type-B retroviral polymerase family. HERV class-II K(HML-2) pol subfamily.

It carries out the reaction DNA(n) + a 2'-deoxyribonucleoside 5'-triphosphate = DNA(n+1) + diphosphate. It catalyses the reaction Endonucleolytic cleavage to 5'-phosphomonoester.. Its function is as follows. Early post-infection, the reverse transcriptase converts the viral RNA genome into double-stranded viral DNA. The RNase H domain of the reverse transcriptase performs two functions. It degrades the RNA template and specifically removes the RNA primer from the RNA/DNA hybrid. Following nuclear import, the integrase catalyzes the insertion of the linear, double-stranded viral DNA into the host cell chromosome. Endogenous Pol proteins may have kept, lost or modified their original function during evolution. The chain is Endogenous retrovirus group K member 25 Pol protein (ERVK-25) from Homo sapiens (Human).